Consider the following 568-residue polypeptide: Estrogen receptor beta (568 aa).

Positions 1 to 177 are modulating; the sequence is MHQQSPVDDV…SLRGKADMHY (177 aa). 2 NR C4-type zinc fingers span residues 178–198 and 214–238; these read CAVC…CEGC and CPAT…LRKC. A DNA-binding region (nuclear receptor) is located at residues 178 to 243; sequence CAVCSDYASG…RLRKCYEVGM (66 aa). Residues 300–536 enclose the NR LBD domain; that stretch reads TPEELIARIM…DLLLEMLDAH (237 aa).

This sequence belongs to the nuclear hormone receptor family. NR3 subfamily. In terms of assembly, binds DNA as a homodimer. Can form a heterodimer with ER-alpha.

It is found in the nucleus. Its function is as follows. Binds estrogens with an affinity similar to that of ER-alpha, and activates expression of reporter genes containing estrogen response elements (ERE) in an estrogen-dependent manner. This chain is Estrogen receptor beta (esr2), found in Oncorhynchus mykiss (Rainbow trout).